The following is a 325-amino-acid chain: Heat-inducible transcription repressor HrcA (325 aa).

Belongs to the HrcA family.

In terms of biological role, negative regulator of class I heat shock genes (grpE-dnaK-dnaJ and groELS operons). Prevents heat-shock induction of these operons. This is Heat-inducible transcription repressor HrcA from Staphylococcus aureus (strain MRSA252).